A 235-amino-acid chain; its full sequence is Segregation and condensation protein A (235 aa).

It belongs to the ScpA family. As to quaternary structure, component of a cohesin-like complex composed of ScpA, ScpB and the Smc homodimer, in which ScpA and ScpB bind to the head domain of Smc. The presence of the three proteins is required for the association of the complex with DNA.

It localises to the cytoplasm. Participates in chromosomal partition during cell division. May act via the formation of a condensin-like complex containing Smc and ScpB that pull DNA away from mid-cell into both cell halves. The protein is Segregation and condensation protein A of Streptococcus uberis (strain ATCC BAA-854 / 0140J).